The primary structure comprises 502 residues: Glycerol kinase (502 aa).

An ADP-binding site is contributed by T14. Residues T14, T15, and S16 each contribute to the ATP site. T14 provides a ligand contact to sn-glycerol 3-phosphate. R18 serves as a coordination point for ADP. R84, E85, Y136, and D246 together coordinate sn-glycerol 3-phosphate. Glycerol-binding residues include R84, E85, Y136, D246, and Q247. The ADP site is built by T268 and G311. ATP is bound by residues T268, G311, Q315, and G412. G412 and N416 together coordinate ADP.

The protein belongs to the FGGY kinase family. As to quaternary structure, homotetramer and homodimer (in equilibrium). Heterodimer with EIIA-Glc. Binds 1 zinc ion per glycerol kinase EIIA-Glc dimer. The zinc ion is important for dimerization.

The catalysed reaction is glycerol + ATP = sn-glycerol 3-phosphate + ADP + H(+). Its pathway is polyol metabolism; glycerol degradation via glycerol kinase pathway; sn-glycerol 3-phosphate from glycerol: step 1/1. Its activity is regulated as follows. Activity of this regulatory enzyme is affected by several metabolites. Allosterically and non-competitively inhibited by fructose 1,6-bisphosphate (FBP) and unphosphorylated phosphocarrier protein EIIA-Glc (III-Glc), an integral component of the bacterial phosphotransferase (PTS) system. Key enzyme in the regulation of glycerol uptake and metabolism. Catalyzes the phosphorylation of glycerol to yield sn-glycerol 3-phosphate. The protein is Glycerol kinase of Salmonella agona (strain SL483).